Here is a 222-residue protein sequence, read N- to C-terminus: Deoxyribose-phosphate aldolase (222 aa).

Aspartate 94 (proton donor/acceptor) is an active-site residue. Lysine 156 (schiff-base intermediate with acetaldehyde) is an active-site residue. Catalysis depends on lysine 185, which acts as the Proton donor/acceptor.

It belongs to the DeoC/FbaB aldolase family. DeoC type 1 subfamily.

It is found in the cytoplasm. The enzyme catalyses 2-deoxy-D-ribose 5-phosphate = D-glyceraldehyde 3-phosphate + acetaldehyde. It participates in carbohydrate degradation; 2-deoxy-D-ribose 1-phosphate degradation; D-glyceraldehyde 3-phosphate and acetaldehyde from 2-deoxy-alpha-D-ribose 1-phosphate: step 2/2. In terms of biological role, catalyzes a reversible aldol reaction between acetaldehyde and D-glyceraldehyde 3-phosphate to generate 2-deoxy-D-ribose 5-phosphate. In Malacoplasma penetrans (strain HF-2) (Mycoplasma penetrans), this protein is Deoxyribose-phosphate aldolase.